Consider the following 328-residue polypeptide: Small neutral protease regulatory protein (328 aa).

Residues 1-60 enclose the HTH lysR-type domain; sequence MELEVRHLRALCAIADAGSLHRAARRLGVAQPTLSTQLTRIEQALGGPLFTRERTGCRPT. A DNA-binding region (H-T-H motif) is located at residues 20–39; that stretch reads LHRAARRLGVAQPTLSTQLT.

The protein belongs to the LysR transcriptional regulatory family.

Its function is as follows. Transcriptional trans-activator of the gene (mprA) for the small neutral protease. The polypeptide is Small neutral protease regulatory protein (mprR) (Streptomyces coelicolor (strain ATCC BAA-471 / A3(2) / M145)).